Reading from the N-terminus, the 673-residue chain is Acetate--CoA ligase [ADP-forming] II (673 aa).

Positions Lys9–Lys45 constitute an ATP-grasp domain. Ala35–Val46 serves as a coordination point for ATP.

The protein in the N-terminal section; belongs to the acetate CoA ligase beta subunit family. This sequence in the C-terminal section; belongs to the acetate CoA ligase alpha subunit family. Homodimer.

It catalyses the reaction acetate + ATP + CoA = acetyl-CoA + ADP + phosphate. With respect to regulation, activity requires divalent metal cations. In terms of biological role, catalyzes the reversible conversion of a variety of acids to the corresponding acyl-CoA esters. Shows the highest activity with the aryl acids, indoleacetate and phenylacetate, as compared to acetate. In the reverse direction, phenylacetyl-CoA is the best substrate. Seems to be involved primarily in the degradation of aryl-CoA esters to the corresponding acids. Participates in the degradation of branched-chain amino acids via branched-chain-acyl-CoA esters. This chain is Acetate--CoA ligase [ADP-forming] II, found in Archaeoglobus fulgidus (strain ATCC 49558 / DSM 4304 / JCM 9628 / NBRC 100126 / VC-16).